The chain runs to 326 residues: 4-hydroxy-3-methylbut-2-enyl diphosphate reductase 1 (326 aa).

Residue C27 participates in [4Fe-4S] cluster binding. (2E)-4-hydroxy-3-methylbut-2-enyl diphosphate contacts are provided by H56 and H89. The dimethylallyl diphosphate site is built by H56 and H89. Residues H56 and H89 each coordinate isopentenyl diphosphate. C111 is a binding site for [4Fe-4S] cluster. H139 is a (2E)-4-hydroxy-3-methylbut-2-enyl diphosphate binding site. H139 provides a ligand contact to dimethylallyl diphosphate. H139 provides a ligand contact to isopentenyl diphosphate. The Proton donor role is filled by E141. T179 provides a ligand contact to (2E)-4-hydroxy-3-methylbut-2-enyl diphosphate. C209 contacts [4Fe-4S] cluster. The (2E)-4-hydroxy-3-methylbut-2-enyl diphosphate site is built by S237, S238, N239, and S281. Positions 237, 238, 239, and 281 each coordinate dimethylallyl diphosphate. Isopentenyl diphosphate-binding residues include S237, S238, N239, and S281.

It belongs to the IspH family. The cofactor is [4Fe-4S] cluster.

It catalyses the reaction isopentenyl diphosphate + 2 oxidized [2Fe-2S]-[ferredoxin] + H2O = (2E)-4-hydroxy-3-methylbut-2-enyl diphosphate + 2 reduced [2Fe-2S]-[ferredoxin] + 2 H(+). The catalysed reaction is dimethylallyl diphosphate + 2 oxidized [2Fe-2S]-[ferredoxin] + H2O = (2E)-4-hydroxy-3-methylbut-2-enyl diphosphate + 2 reduced [2Fe-2S]-[ferredoxin] + 2 H(+). Its pathway is isoprenoid biosynthesis; dimethylallyl diphosphate biosynthesis; dimethylallyl diphosphate from (2E)-4-hydroxy-3-methylbutenyl diphosphate: step 1/1. The protein operates within isoprenoid biosynthesis; isopentenyl diphosphate biosynthesis via DXP pathway; isopentenyl diphosphate from 1-deoxy-D-xylulose 5-phosphate: step 6/6. Its function is as follows. Catalyzes the conversion of 1-hydroxy-2-methyl-2-(E)-butenyl 4-diphosphate (HMBPP) into a mixture of isopentenyl diphosphate (IPP) and dimethylallyl diphosphate (DMAPP). Acts in the terminal step of the DOXP/MEP pathway for isoprenoid precursor biosynthesis. The protein is 4-hydroxy-3-methylbut-2-enyl diphosphate reductase 1 of Burkholderia pseudomallei (strain K96243).